A 366-amino-acid chain; its full sequence is tRNA-specific 2-thiouridylase MnmA (366 aa).

ATP contacts are provided by residues 10–17 (GLSGGVDS) and Met-36. The tract at residues 96–98 (NPD) is interaction with target base in tRNA. Catalysis depends on Cys-101, which acts as the Nucleophile. Cys-101 and Cys-197 are joined by a disulfide. Gly-125 is a binding site for ATP. Positions 147–149 (KDQ) are interaction with tRNA. Catalysis depends on Cys-197, which acts as the Cysteine persulfide intermediate. The tract at residues 309–310 (RY) is interaction with tRNA.

The protein belongs to the MnmA/TRMU family.

Its subcellular location is the cytoplasm. The enzyme catalyses S-sulfanyl-L-cysteinyl-[protein] + uridine(34) in tRNA + AH2 + ATP = 2-thiouridine(34) in tRNA + L-cysteinyl-[protein] + A + AMP + diphosphate + H(+). Its function is as follows. Catalyzes the 2-thiolation of uridine at the wobble position (U34) of tRNA, leading to the formation of s(2)U34. In Alkalilimnicola ehrlichii (strain ATCC BAA-1101 / DSM 17681 / MLHE-1), this protein is tRNA-specific 2-thiouridylase MnmA.